Consider the following 271-residue polypeptide: MEFWQHIYSNFNVIAFSIFGLKVHWYGIMYVIALLLALLLAKFFVRKFQLDINEKHLDSYFIWVEIGVILGARLGYILIYDANTMYYITHPWQIFNPYINGEFVGIRGMSYHGAIIGFLIATLLFCKKYKTNPWIFLDLVALSVPLAYVFGRIGNFLNQELFGRITNVPWGIYVDGVLRHPSQLYEAFLEGIVVFIIVYLARFKQSFQGELILVYAGAYSLARFICEFYREPDFGIGFVLWGMSMGQILSFIMFITALLVYICIKFKKVNI.

Helical transmembrane passes span 25 to 45 (WYGI…KFFV), 60 to 80 (YFIW…ILIY), 103 to 123 (FVGI…IATL), 134 to 154 (WIFL…GRIG), 181 to 201 (PSQL…VYLA), 209 to 229 (GELI…CEFY), and 235 to 255 (GIGF…IMFI). A 1,2-diacyl-sn-glycero-3-phospho-(1'-sn-glycerol) is bound at residue Arg152.

Belongs to the Lgt family.

Its subcellular location is the cell inner membrane. It carries out the reaction L-cysteinyl-[prolipoprotein] + a 1,2-diacyl-sn-glycero-3-phospho-(1'-sn-glycerol) = an S-1,2-diacyl-sn-glyceryl-L-cysteinyl-[prolipoprotein] + sn-glycerol 1-phosphate + H(+). Its pathway is protein modification; lipoprotein biosynthesis (diacylglyceryl transfer). In terms of biological role, catalyzes the transfer of the diacylglyceryl group from phosphatidylglycerol to the sulfhydryl group of the N-terminal cysteine of a prolipoprotein, the first step in the formation of mature lipoproteins. The sequence is that of Phosphatidylglycerol--prolipoprotein diacylglyceryl transferase from Campylobacter jejuni subsp. jejuni serotype O:6 (strain 81116 / NCTC 11828).